The chain runs to 1425 residues: Ferlin 1 (1425 aa).

3 consecutive C2 domains span residues 1–123 (MAAK…RQWV), 161–281 (VNEG…PRWF), and 506–629 (TKAG…PVWL). The segment at 871–952 (RPQASRLSRE…ALAASPEEET (82 aa)) is disordered. Basic and acidic residues-rich tracts occupy residues 877–889 (LSRE…ERGK) and 912–926 (ETEK…KKEG). 2 consecutive C2 domains span residues 1032-1160 (EMDA…EQMV) and 1192-1319 (RADY…QQHY). A helical membrane pass occupies residues 1404–1424 (TGVWMTVAGIIALVIFVMFLL).

The protein belongs to the ferlin family.

It is found in the golgi apparatus. The protein localises to the trans-Golgi network membrane. The protein resides in the endosome membrane. Its subcellular location is the cytoplasm. Its function is as follows. Plays a role in microneme replenishment, probably at the vesicular trafficking level. Directs microneme organelle traffic differentially based on microneme population. Regulates microneme secretion: facilitates microneme membrane fusion with the plasma membrane. This Toxoplasma gondii protein is Ferlin 1.